The sequence spans 396 residues: Stearoyl-[acyl-carrier-protein] 9-desaturase, chloroplastic (396 aa).

A chloroplast-targeting transit peptide spans 1–33 (MAIRINTATFQSDLYRSFAFPQPKPLRSPKFAM). Fe cation is bound by residues glutamate 138, glutamate 176, histidine 179, glutamate 229, glutamate 262, and histidine 265.

This sequence belongs to the fatty acid desaturase type 2 family. In terms of assembly, homodimer. Fe(2+) serves as cofactor.

It localises to the plastid. The protein localises to the chloroplast. It catalyses the reaction octadecanoyl-[ACP] + 2 reduced [2Fe-2S]-[ferredoxin] + O2 + 2 H(+) = (9Z)-octadecenoyl-[ACP] + 2 oxidized [2Fe-2S]-[ferredoxin] + 2 H2O. It functions in the pathway lipid metabolism; fatty acid metabolism. Functionally, converts stearoyl-ACP to oleoyl-ACP by introduction of a cis double bond between carbons 9 and 10 of the acyl chain. This is Stearoyl-[acyl-carrier-protein] 9-desaturase, chloroplastic from Helianthus annuus (Common sunflower).